The sequence spans 337 residues: Ketol-acid reductoisomerase (NADP(+)) (337 aa).

The KARI N-terminal Rossmann domain occupies 3-183 (IDVFYDDDAD…GGGRAGVIPT (181 aa)). NADP(+)-binding positions include 26–29 (YGSQ), Arg-49, Ser-52, Ser-54, and 84–87 (DTSQ). His-109 is a catalytic residue. Residue Gly-135 participates in NADP(+) binding. A KARI C-terminal knotted domain is found at 184-329 (TFEAETVTDL…EKLRDLMSWV (146 aa)). 4 residues coordinate Mg(2+): Asp-192, Glu-196, Glu-228, and Glu-232. Ser-253 is a binding site for substrate.

The protein belongs to the ketol-acid reductoisomerase family. The cofactor is Mg(2+).

It carries out the reaction (2R)-2,3-dihydroxy-3-methylbutanoate + NADP(+) = (2S)-2-acetolactate + NADPH + H(+). It catalyses the reaction (2R,3R)-2,3-dihydroxy-3-methylpentanoate + NADP(+) = (S)-2-ethyl-2-hydroxy-3-oxobutanoate + NADPH + H(+). It participates in amino-acid biosynthesis; L-isoleucine biosynthesis; L-isoleucine from 2-oxobutanoate: step 2/4. It functions in the pathway amino-acid biosynthesis; L-valine biosynthesis; L-valine from pyruvate: step 2/4. Involved in the biosynthesis of branched-chain amino acids (BCAA). Catalyzes an alkyl-migration followed by a ketol-acid reduction of (S)-2-acetolactate (S2AL) to yield (R)-2,3-dihydroxy-isovalerate. In the isomerase reaction, S2AL is rearranged via a Mg-dependent methyl migration to produce 3-hydroxy-3-methyl-2-ketobutyrate (HMKB). In the reductase reaction, this 2-ketoacid undergoes a metal-dependent reduction by NADPH to yield (R)-2,3-dihydroxy-isovalerate. This Corynebacterium urealyticum (strain ATCC 43042 / DSM 7109) protein is Ketol-acid reductoisomerase (NADP(+)).